We begin with the raw amino-acid sequence, 273 residues long: Zinc finger protein AZF2 (273 aa).

Positions 33–64 (LKRKRSKRQRSHSPSSSSSSPPRSRPKSQNQD) are disordered. Residues 34 to 43 (KRKRSKRQRS) are compositionally biased toward basic residues. Low complexity predominate over residues 44-54 (HSPSSSSSSPP). C2H2-type zinc fingers lie at residues 106–128 (YKCN…KASH) and 165–187 (HECS…KRCH). The segment at 195-215 (GGGGGSKSISHSGSVSSTVSE) is disordered. The span at 201–213 (KSISHSGSVSSTV) shows a compositional bias: low complexity.

Expressed in roots, radicles, cotyledons, hypocotyls, leaf veins, stems, sepals, petals, stamens, placenta, funiculi and maturated seeds.

It is found in the nucleus. Transcriptional repressor involved in the inhibition of plant growth under abiotic stress conditions. Can repress the expression of various genes, including osmotic stress and abscisic acid-repressive genes and auxin-inducible genes, by binding to their promoter regions in a DNA sequence-specific manner. Acts as a negative regulator of abscisic acid (ABA) signaling during seed germination. Probably involved in jasmonate (JA) early signaling response. May regulate the expression of the JA biosynthesis gene LOX3 and control the expression of TIFY10A/JAZ1, a key repressor in the JA signaling cascade. May act as a positive regulator of leaf senescence. Has been identified as a suppressor of the deficiency of yeast snf4 mutant to grow on non-fermentable carbon source. This chain is Zinc finger protein AZF2 (AZF2), found in Arabidopsis thaliana (Mouse-ear cress).